The primary structure comprises 260 residues: Adenosylcobinamide-GDP ribazoletransferase (260 aa).

The next 8 helical transmembrane spans lie at 3-23, 36-56, 60-80, 108-128, 133-153, 180-200, 206-226, and 239-259; these read APLWLRDLAGAWIFYSVLPAW, FAPWIGLVLGGLQSFLWLVLI, WPTSAVTLLVIGLGAWLSGGL, VGASGVQALLVVVLLQIASLL, LAPLALLIAAFWGRCAPLWAM, ALPACLVLLLALTVVPSLMIV, MVLMAGIGVGVLPAFLVPELL, and GASVVLVETITLLLLAVLLPA.

This sequence belongs to the CobS family. Requires Mg(2+) as cofactor.

It is found in the cell inner membrane. The catalysed reaction is alpha-ribazole + adenosylcob(III)inamide-GDP = adenosylcob(III)alamin + GMP + H(+). It carries out the reaction alpha-ribazole 5'-phosphate + adenosylcob(III)inamide-GDP = adenosylcob(III)alamin 5'-phosphate + GMP + H(+). It participates in cofactor biosynthesis; adenosylcobalamin biosynthesis; adenosylcobalamin from cob(II)yrinate a,c-diamide: step 7/7. Joins adenosylcobinamide-GDP and alpha-ribazole to generate adenosylcobalamin (Ado-cobalamin). Also synthesizes adenosylcobalamin 5'-phosphate from adenosylcobinamide-GDP and alpha-ribazole 5'-phosphate. In Prochlorococcus marinus (strain MIT 9313), this protein is Adenosylcobinamide-GDP ribazoletransferase.